A 283-amino-acid polypeptide reads, in one-letter code: Elongation factor Ts (283 aa).

The interval 80–83 (TDFV) is involved in Mg(2+) ion dislocation from EF-Tu.

Belongs to the EF-Ts family.

The protein resides in the cytoplasm. Associates with the EF-Tu.GDP complex and induces the exchange of GDP to GTP. It remains bound to the aminoacyl-tRNA.EF-Tu.GTP complex up to the GTP hydrolysis stage on the ribosome. The protein is Elongation factor Ts of Salmonella agona (strain SL483).